The sequence spans 369 residues: Putative F-box/kelch-repeat protein At4g39760 (369 aa).

One can recognise an F-box domain in the interval 14-60 (SLSFSSLPHEIVVSCLARVSGSYYPKLCLVSKQFRSIILSNEIYKAR). Kelch repeat units lie at residues 131-177 (ETYI…GQYP), 178-224 (NIYV…KMKM), and 228-274 (NVYV…KNCW).

This chain is Putative F-box/kelch-repeat protein At4g39760, found in Arabidopsis thaliana (Mouse-ear cress).